We begin with the raw amino-acid sequence, 166 residues long: Outer membrane protein assembly factor BamE (166 aa).

Residues 1–18 (MKRTVFPLAVAAALTLTA) form the signal peptide. Cys-19 carries the N-palmitoyl cysteine lipid modification. A lipid anchor (S-diacylglycerol cysteine) is attached at Cys-19. Residues 143-166 (LFSNDDSGEMPVKPESKPSDLLNE) form a disordered region.

This sequence belongs to the BamE family. Part of the Bam complex.

Its subcellular location is the cell outer membrane. In terms of biological role, part of the outer membrane protein assembly complex, which is involved in assembly and insertion of beta-barrel proteins into the outer membrane. This chain is Outer membrane protein assembly factor BamE, found in Methylomonas methanica (strain DSM 25384 / MC09).